Here is a 741-residue protein sequence, read N- to C-terminus: NUT family member 2G (741 aa).

Disordered stretches follow at residues 172 to 200, 293 to 375, 391 to 424, 496 to 624, and 638 to 741; these read PGNA…PDDS, IQKS…PEEI, LGSH…SDPG, RAAP…LPGM, and RLSQ…HCSQ. Residues 304–321 show a composition bias toward pro residues; it reads SLPPPAPPRLEPRGPPAP. Residues 402–412 show a composition bias toward basic and acidic residues; sequence EGQREKGKVEQ. Residues 528–545 show a composition bias toward polar residues; sequence QRVSVETSPPQTAAQDPQ. Positions 639–650 are enriched in low complexity; it reads LSQSPVPSSGLL. The span at 731-741 shows a compositional bias: basic residues; that stretch reads SRRKKKRHCSQ.

This sequence belongs to the NUT family.

The polypeptide is NUT family member 2G (NUTM2G) (Homo sapiens (Human)).